The chain runs to 139 residues: Small ribosomal subunit protein uS12 (139 aa).

Disordered regions lie at residues Met1–Pro22 and Lys37–Lys57. Residues Arg9–Ser19 are compositionally biased toward basic residues. The residue at position 102 (Asp102) is a 3-methylthioaspartic acid.

This sequence belongs to the universal ribosomal protein uS12 family. As to quaternary structure, part of the 30S ribosomal subunit. Contacts proteins S8 and S17. May interact with IF1 in the 30S initiation complex.

Its function is as follows. With S4 and S5 plays an important role in translational accuracy. In terms of biological role, interacts with and stabilizes bases of the 16S rRNA that are involved in tRNA selection in the A site and with the mRNA backbone. Located at the interface of the 30S and 50S subunits, it traverses the body of the 30S subunit contacting proteins on the other side and probably holding the rRNA structure together. The combined cluster of proteins S8, S12 and S17 appears to hold together the shoulder and platform of the 30S subunit. In Limosilactobacillus reuteri (strain DSM 20016) (Lactobacillus reuteri), this protein is Small ribosomal subunit protein uS12.